The sequence spans 156 residues: Succinate dehydrogenase [ubiquinone] cytochrome b small subunit 1, mitochondrial (156 aa).

The N-terminal 25 residues, 1–25 (MLSAVRRAIPLSARILRTSLIQRCA), are a transit peptide targeting the mitochondrion. Topologically, residues 26 to 59 (GATSAAVTGAAPPQFDPIAAEKGFKPLHSHGTLF) are mitochondrial matrix. Residues 60-78 (KIERYFAAAMVPLIPAAYF) traverse the membrane as a helical segment. The Mitochondrial intermembrane segment spans residues 79 to 83 (IHGRE). The helical transmembrane segment at 84–104 (MDLCLALALTLHVHWGVWGVV) threads the bilayer. Histidine 95 is a binding site for heme b. The Mitochondrial matrix portion of the chain corresponds to 105-119 (NDYGRPFVLGDTLAA). Tyrosine 107 is a binding site for a rhodoquinol. A helical transmembrane segment spans residues 120–141 (AVRVGAYIFTACLLAGLLYFNE). Residues 142-156 (HDVGLTRAFEMVWEL) lie on the Mitochondrial intermembrane side of the membrane.

Belongs to the CybS family. In terms of assembly, component of the mitochondrial electron transport chain complex II composed of four subunits: a flavoprotein (Fp), an iron-sulfur protein (Ip), and a large cytochrome b (CybL) subunit and a small cytochrome b (CybS) subunit. There are 2 developmental stage-specific forms of complex II which have the Ip and CybL subunits in common. Complex II from the free-living larvae (aerobic environment) acts as a succinate dehydrogenase and is composed of the common subunit Ip and CybL and the stage specific subunits FpL and CybSL. Complex II from parasitic larvae and adults (anaerobic environment) acts as a fumarate reductase and is composed of the common subunit Ip and CybL and the stage specific subunits FpA and CybSA. Requires heme b as cofactor. In terms of tissue distribution, expressed in adult muscles (at protein level).

The protein localises to the mitochondrion inner membrane. Membrane-bound small subunit (CybS) of the mitochondrial electron transport chain complex II, which together with the membrane-bound large subunit (CybL), anchor the catalytic subunits to the inner mitochondria membrane. During the parasitic larvae and adult stages, which occur in an anaerobic environment, complex II acts as a fumarate reductase by transferring electrons from rhodoquinol to fumarate. This Ascaris suum (Pig roundworm) protein is Succinate dehydrogenase [ubiquinone] cytochrome b small subunit 1, mitochondrial.